A 124-amino-acid polypeptide reads, in one-letter code: Acidic phospholipase A2 (124 aa).

Cystine bridges form between Cys26-Cys116, Cys28-Cys44, Cys43-Cys95, Cys49-Cys124, Cys50-Cys88, Cys57-Cys81, and Cys75-Cys86. Residues Tyr27, Gly29, and Gly31 each coordinate Ca(2+). Residue His47 is part of the active site. Asp48 lines the Ca(2+) pocket. Asp89 is a catalytic residue.

It belongs to the phospholipase A2 family. Group II subfamily. D49 sub-subfamily. Ca(2+) serves as cofactor. As to expression, expressed by the venom gland.

The protein resides in the secreted. The catalysed reaction is a 1,2-diacyl-sn-glycero-3-phosphocholine + H2O = a 1-acyl-sn-glycero-3-phosphocholine + a fatty acid + H(+). Snake venom phospholipase A2 (PLA2) that inhibits ADP-induced platelet aggregation. PLA2 catalyzes the calcium-dependent hydrolysis of the 2-acyl groups in 3-sn-phosphoglycerides. This is Acidic phospholipase A2 from Gloydius ussuriensis (Ussuri mamushi).